We begin with the raw amino-acid sequence, 313 residues long: D-alanine--D-alanine ligase (313 aa).

One can recognise an ATP-grasp domain in the interval 108 to 308 (KLVWQQTGVP…YSELVVKVLS (201 aa)). 138-193 (VAKLGLPLFVKPASEGSSVAVLKVKTADALPAALSEAATHDKIVIVEKSIEGGGEY) is a binding site for ATP. Residues Asp-262, Glu-275, and Asn-277 each contribute to the Mg(2+) site.

This sequence belongs to the D-alanine--D-alanine ligase family. Mg(2+) is required as a cofactor. It depends on Mn(2+) as a cofactor.

It localises to the cytoplasm. It catalyses the reaction 2 D-alanine + ATP = D-alanyl-D-alanine + ADP + phosphate + H(+). It functions in the pathway cell wall biogenesis; peptidoglycan biosynthesis. Functionally, cell wall formation. The polypeptide is D-alanine--D-alanine ligase (Burkholderia ambifaria (strain MC40-6)).